A 324-amino-acid chain; its full sequence is Beta-ketoacyl-[acyl-carrier-protein] synthase III (324 aa).

Residues Cys-114 and His-251 contribute to the active site. Residues 252–256 form an ACP-binding region; that stretch reads QANLR. The active site involves Asn-281.

This sequence belongs to the thiolase-like superfamily. FabH family. Homodimer.

Its subcellular location is the cytoplasm. The catalysed reaction is malonyl-[ACP] + acetyl-CoA + H(+) = 3-oxobutanoyl-[ACP] + CO2 + CoA. Its pathway is lipid metabolism; fatty acid biosynthesis. In terms of biological role, catalyzes the condensation reaction of fatty acid synthesis by the addition to an acyl acceptor of two carbons from malonyl-ACP. Catalyzes the first condensation reaction which initiates fatty acid synthesis and may therefore play a role in governing the total rate of fatty acid production. Possesses both acetoacetyl-ACP synthase and acetyl transacylase activities. Its substrate specificity determines the biosynthesis of branched-chain and/or straight-chain of fatty acids. The polypeptide is Beta-ketoacyl-[acyl-carrier-protein] synthase III (Dinoroseobacter shibae (strain DSM 16493 / NCIMB 14021 / DFL 12)).